The chain runs to 308 residues: B- and T-lymphocyte attenuator (308 aa).

A signal peptide spans 1–29 (MKTVPAMLVTPRSFREFFILLLGLWSILC). The Extracellular portion of the chain corresponds to 30 to 183 (KEPTKRIGEE…ERPGRTWLLY (154 aa)). Residues 32 to 134 (PTKRIGEECR…SANLNSEVIN (103 aa)) form the Ig-like V-type domain. 3 disulfides stabilise this stretch: C40–C69, C64–C124, and C78–C85. N49, N74, N81, N148, and N165 each carry an N-linked (GlcNAc...) asparagine glycan. The chain crosses the membrane as a helical span at residues 184–204 (ALLPLGTSLLLLACVCLLCFL). Residues 205 to 308 (RRIQGKEKKP…TEYASICVRS (104 aa)) are Cytoplasmic-facing.

In terms of assembly, interacts with tyrosine phosphatases PTPN6/SHP-1 and PTPN11/SHP-2. Interacts with TNFRSF14/HVEM (via cysteine-rich domain 1). In terms of processing, phosphorylated on Tyr residues by TNFRSF14 and by antigen receptors cross-linking, both inducing association with PTPN6 and PTPN11. Post-translationally, N-glycosylated.

The protein localises to the cell membrane. Inhibitory receptor on lymphocytes that negatively regulates antigen receptor signaling via PTPN6/SHP-1 and PTPN11/SHP-2. May interact in cis (on the same cell) or in trans (on other cells) with TNFRSF14. In cis interactions, appears to play an immune regulatory role inhibiting in trans interactions in naive T cells to maintain a resting state. In trans interactions, can predominate during adaptive immune response to provide survival signals to effector T cells. The sequence is that of B- and T-lymphocyte attenuator from Rattus norvegicus (Rat).